We begin with the raw amino-acid sequence, 409 residues long: ATPase ASNA1 homolog (409 aa).

21-28 (KGGVGKTT) contacts ATP. Residue Asp-62 is part of the active site. Residues Glu-303 and Asn-330 each coordinate ATP. Residues Cys-342 and Cys-345 each coordinate Zn(2+).

Belongs to the arsA ATPase family. As to quaternary structure, homodimer.

It localises to the cytoplasm. The protein localises to the endoplasmic reticulum. Functionally, ATPase required for the post-translational delivery of tail-anchored (TA) proteins to the endoplasmic reticulum. Recognizes and selectively binds the transmembrane domain of TA proteins in the cytosol. This complex then targets to the endoplasmic reticulum by membrane-bound receptors, where the tail-anchored protein is released for insertion. This process is regulated by ATP binding and hydrolysis. ATP binding drives the homodimer towards the closed dimer state, facilitating recognition of newly synthesized TA membrane proteins. ATP hydrolysis is required for insertion. Subsequently, the homodimer reverts towards the open dimer state, lowering its affinity for the membrane-bound receptor, and returning it to the cytosol to initiate a new round of targeting. This Leishmania infantum protein is ATPase ASNA1 homolog.